The sequence spans 332 residues: Long form salivary protein D7L1 (332 aa).

Residues 1-21 (MHSPKSFLLLAVVFVALRVTA) form the signal peptide. 2 disulfides stabilise this stretch: cysteine 40-cysteine 77 and cysteine 73-cysteine 133. Residue tryptophan 61 coordinates leukotriene E4. Lysine 176 contributes to the leukotriene E4 binding site. 3 cysteine pairs are disulfide-bonded: cysteine 184/cysteine 219, cysteine 200/cysteine 331, and cysteine 259/cysteine 278. 2 residues coordinate noradrenaline: glutamate 185 and arginine 203. Residues aspartate 294 and glutamate 297 each coordinate noradrenaline.

The protein belongs to the PBP/GOBP family. Female mosquito salivary gland (at protein level).

It is found in the secreted. Functionally, modulates blood feeding of female mosquitoes on vertebrate species by binding and sequestering different mediators involved in the host response, such as biogenic amines and eicosanoids. Binds dopamine, serotonin, histamine, tryptamine, adrenaline, noradrenaline, leukotriene B4, leukotriene C4, leukotriene D4, leukotriene E4 and U-46619, a stable analog of thromboxane A2. Inhibits platelet aggregation induced by serotonin and low doses of thromboxane A2 analog U-46619 but not by high doses of U-46619, collagen or ADP. Prevents leukocyte recruitment. This Aedes albopictus (Asian tiger mosquito) protein is Long form salivary protein D7L1.